A 157-amino-acid polypeptide reads, in one-letter code: Ribosome maturation factor RimP (157 aa).

This sequence belongs to the RimP family.

The protein resides in the cytoplasm. Its function is as follows. Required for maturation of 30S ribosomal subunits. In Synechococcus sp. (strain CC9311), this protein is Ribosome maturation factor RimP.